A 291-amino-acid chain; its full sequence is 4-diphosphocytidyl-2-C-methyl-D-erythritol kinase (291 aa).

Lys10 is an active-site residue. ATP is bound at residue 94–104 (PVSAGLAGGSS). Asp136 is an active-site residue.

The protein belongs to the GHMP kinase family. IspE subfamily.

It catalyses the reaction 4-CDP-2-C-methyl-D-erythritol + ATP = 4-CDP-2-C-methyl-D-erythritol 2-phosphate + ADP + H(+). It participates in isoprenoid biosynthesis; isopentenyl diphosphate biosynthesis via DXP pathway; isopentenyl diphosphate from 1-deoxy-D-xylulose 5-phosphate: step 3/6. Functionally, catalyzes the phosphorylation of the position 2 hydroxy group of 4-diphosphocytidyl-2C-methyl-D-erythritol. In Listeria welshimeri serovar 6b (strain ATCC 35897 / DSM 20650 / CCUG 15529 / CIP 8149 / NCTC 11857 / SLCC 5334 / V8), this protein is 4-diphosphocytidyl-2-C-methyl-D-erythritol kinase.